Reading from the N-terminus, the 414-residue chain is Ribulose bisphosphate carboxylase large chain (414 aa).

Substrate is bound by residues Asn100 and Thr150. The Proton acceptor role is filled by Lys152. A substrate-binding site is contributed by Lys154. Mg(2+)-binding residues include Lys178, Asp180, and Glu181. At Lys178 the chain carries N6-carboxylysine. The active-site Proton acceptor is the His271. Substrate contacts are provided by Arg272, His304, and Ser356.

It belongs to the RuBisCO large chain family. Type I subfamily. Heterohexadecamer of 8 large chains and 8 small chains; disulfide-linked. The disulfide link is formed within the large subunit homodimers. Mg(2+) is required as a cofactor. Post-translationally, the disulfide bond which can form in the large chain dimeric partners within the hexadecamer appears to be associated with oxidative stress and protein turnover.

It localises to the plastid. The protein localises to the chloroplast. The enzyme catalyses 2 (2R)-3-phosphoglycerate + 2 H(+) = D-ribulose 1,5-bisphosphate + CO2 + H2O. It carries out the reaction D-ribulose 1,5-bisphosphate + O2 = 2-phosphoglycolate + (2R)-3-phosphoglycerate + 2 H(+). RuBisCO catalyzes two reactions: the carboxylation of D-ribulose 1,5-bisphosphate, the primary event in carbon dioxide fixation, as well as the oxidative fragmentation of the pentose substrate in the photorespiration process. Both reactions occur simultaneously and in competition at the same active site. This chain is Ribulose bisphosphate carboxylase large chain (rbcL), found in Blechnopsis orientalis (Fish fern).